Here is a 385-residue protein sequence, read N- to C-terminus: Probable tRNA sulfurtransferase (385 aa).

Residues 57-160 (DGVIERVKKV…RGNAYVFTDK (104 aa)) form the THUMP domain. Residues 180 to 181 (ML), 205 to 206 (YY), arginine 262, glycine 284, and glutamine 293 contribute to the ATP site.

The protein belongs to the ThiI family.

The protein resides in the cytoplasm. The catalysed reaction is [ThiI sulfur-carrier protein]-S-sulfanyl-L-cysteine + a uridine in tRNA + 2 reduced [2Fe-2S]-[ferredoxin] + ATP + H(+) = [ThiI sulfur-carrier protein]-L-cysteine + a 4-thiouridine in tRNA + 2 oxidized [2Fe-2S]-[ferredoxin] + AMP + diphosphate. The enzyme catalyses [ThiS sulfur-carrier protein]-C-terminal Gly-Gly-AMP + S-sulfanyl-L-cysteinyl-[cysteine desulfurase] + AH2 = [ThiS sulfur-carrier protein]-C-terminal-Gly-aminoethanethioate + L-cysteinyl-[cysteine desulfurase] + A + AMP + 2 H(+). The protein operates within cofactor biosynthesis; thiamine diphosphate biosynthesis. Functionally, catalyzes the ATP-dependent transfer of a sulfur to tRNA to produce 4-thiouridine in position 8 of tRNAs, which functions as a near-UV photosensor. Also catalyzes the transfer of sulfur to the sulfur carrier protein ThiS, forming ThiS-thiocarboxylate. This is a step in the synthesis of thiazole, in the thiamine biosynthesis pathway. The sulfur is donated as persulfide by IscS. In Clostridium perfringens (strain ATCC 13124 / DSM 756 / JCM 1290 / NCIMB 6125 / NCTC 8237 / Type A), this protein is Probable tRNA sulfurtransferase.